The primary structure comprises 297 residues: Giardin subunit alpha-6 (297 aa).

Annexin repeat units lie at residues 3–72 (TTVQ…AYLW), 74–146 (KPGD…HWIL), 153–222 (FDID…AAHY), and 226–295 (HPAR…ILWR).

It belongs to the annexin family. Giardin subunit alpha subfamily.

The protein resides in the cytoplasm. The protein localises to the cytoskeleton. Its function is as follows. Giardins are involved in parasite attachment to the intestinal mucosa and in the cytoskeletal disassembly and reassembly that marks the transition from infectious trophozoite to transmissible cyst. They may interact with other cytoskeletal proteins such as microtubules in the microribbons or crossbridges, to maintain the integrity of the ventral disk. This Giardia intestinalis (Giardia lamblia) protein is Giardin subunit alpha-6.